The primary structure comprises 106 residues: Iron-sulfur cluster assembly protein CyaY (106 aa).

This sequence belongs to the frataxin family.

Involved in iron-sulfur (Fe-S) cluster assembly. May act as a regulator of Fe-S biogenesis. The polypeptide is Iron-sulfur cluster assembly protein CyaY (Yersinia enterocolitica serotype O:8 / biotype 1B (strain NCTC 13174 / 8081)).